The following is a 463-amino-acid chain: Glutamate--tRNA ligase (463 aa).

Residues 10 to 20 carry the 'HIGH' region motif; that stretch reads PSPTGYLHIGG. The 'KMSKS' region signature appears at 252-256; that stretch reads KLSKR. An ATP-binding site is contributed by Lys255.

The protein belongs to the class-I aminoacyl-tRNA synthetase family. Glutamate--tRNA ligase type 1 subfamily. Monomer.

The protein resides in the cytoplasm. The catalysed reaction is tRNA(Glu) + L-glutamate + ATP = L-glutamyl-tRNA(Glu) + AMP + diphosphate. Functionally, catalyzes the attachment of glutamate to tRNA(Glu) in a two-step reaction: glutamate is first activated by ATP to form Glu-AMP and then transferred to the acceptor end of tRNA(Glu). The protein is Glutamate--tRNA ligase of Mycoplasmopsis agalactiae (strain NCTC 10123 / CIP 59.7 / PG2) (Mycoplasma agalactiae).